A 368-amino-acid chain; its full sequence is Glutaminyl-peptide cyclotransferase (368 aa).

The signal sequence occupies residues 1-23; the sequence is MAGERRDSKAAAFFCLAWALCLA. N-linked (GlcNAc...) asparagine glycosylation occurs at asparagine 53. A disulfide bridge links cysteine 143 with cysteine 169. Aspartate 164 contributes to the Zn(2+) binding site. Catalysis depends on glutamate 207, which acts as the Proton acceptor. Zn(2+) is bound at residue glutamate 208. The Proton acceptor role is filled by aspartate 254. Residue asparagine 292 is glycosylated (N-linked (GlcNAc...) asparagine). Histidine 336 provides a ligand contact to Zn(2+). An N-linked (GlcNAc...) asparagine glycan is attached at asparagine 352.

The protein belongs to the glutaminyl-peptide cyclotransferase family. As to expression, expressed by the venom gland.

It is found in the secreted. It carries out the reaction N-terminal L-glutaminyl-[peptide] = N-terminal 5-oxo-L-prolyl-[peptide] + NH4(+). In terms of biological role, responsible for the biosynthesis of pyroglutamyl peptides. Has a bias against acidic and tryptophan residues adjacent to the N-terminal glutaminyl residue and a lack of importance of chain length after the second residue. Also catalyzes N-terminal pyroglutamate formation. In Boiga dendrophila (Mangrove snake), this protein is Glutaminyl-peptide cyclotransferase (QPCT).